The following is a 247-amino-acid chain: Carboxy-S-adenosyl-L-methionine synthase (247 aa).

Residues Tyr-39, 64–66 (GCS), 89–90 (DN), 117–118 (DI), Asn-132, and Arg-199 each bind S-adenosyl-L-methionine.

The protein belongs to the class I-like SAM-binding methyltransferase superfamily. Cx-SAM synthase family. As to quaternary structure, homodimer.

The enzyme catalyses prephenate + S-adenosyl-L-methionine = carboxy-S-adenosyl-L-methionine + 3-phenylpyruvate + H2O. In terms of biological role, catalyzes the conversion of S-adenosyl-L-methionine (SAM) to carboxy-S-adenosyl-L-methionine (Cx-SAM). This chain is Carboxy-S-adenosyl-L-methionine synthase, found in Salmonella enteritidis PT4 (strain P125109).